A 418-amino-acid polypeptide reads, in one-letter code: Trans-acting enoyl reductase (418 aa).

It belongs to the saccharopine dehydrogenase family. Enoyl reductase subfamily.

Functionally, involved in the reduction of the double bond between C-4 and C-5 during phthiocerol dimycocerosates (DIM A) and glycosylated phenolphthiocerol dimycocerosates (PGL) biosynthesis. In Mycobacterium leprae (strain TN), this protein is Trans-acting enoyl reductase.